We begin with the raw amino-acid sequence, 244 residues long: tRNA (guanine-N(1)-)-methyltransferase (244 aa).

S-adenosyl-L-methionine contacts are provided by residues G112 and 132–137; that span reads IGDYIL.

Belongs to the RNA methyltransferase TrmD family. As to quaternary structure, homodimer.

It is found in the cytoplasm. It catalyses the reaction guanosine(37) in tRNA + S-adenosyl-L-methionine = N(1)-methylguanosine(37) in tRNA + S-adenosyl-L-homocysteine + H(+). In terms of biological role, specifically methylates guanosine-37 in various tRNAs. This chain is tRNA (guanine-N(1)-)-methyltransferase, found in Geobacillus kaustophilus (strain HTA426).